Reading from the N-terminus, the 165-residue chain is Transcription antitermination protein NusB (165 aa).

This sequence belongs to the NusB family.

Involved in transcription antitermination. Required for transcription of ribosomal RNA (rRNA) genes. Binds specifically to the boxA antiterminator sequence of the ribosomal RNA (rrn) operons. The polypeptide is Transcription antitermination protein NusB (Nitratidesulfovibrio vulgaris (strain DSM 19637 / Miyazaki F) (Desulfovibrio vulgaris)).